Here is a 107-residue protein sequence, read N- to C-terminus: ATP-dependent Clp protease adapter protein ClpS (107 aa).

Residues 1 to 20 (MAQKHEHDTSVITESAPKQK) form a disordered region.

This sequence belongs to the ClpS family. In terms of assembly, binds to the N-terminal domain of the chaperone ClpA.

Functionally, involved in the modulation of the specificity of the ClpAP-mediated ATP-dependent protein degradation. In Myxococcus xanthus (strain DK1622), this protein is ATP-dependent Clp protease adapter protein ClpS.